The following is a 240-amino-acid chain: Purine nucleoside phosphorylase RC0672 (240 aa).

His-60, Cys-96, and His-113 together coordinate Zn(2+).

The protein belongs to the purine nucleoside phosphorylase YfiH/LACC1 family. In terms of assembly, homodimer. Cu(2+) serves as cofactor. Requires Zn(2+) as cofactor.

It carries out the reaction adenosine + phosphate = alpha-D-ribose 1-phosphate + adenine. It catalyses the reaction S-methyl-5'-thioadenosine + phosphate = 5-(methylsulfanyl)-alpha-D-ribose 1-phosphate + adenine. The catalysed reaction is inosine + phosphate = alpha-D-ribose 1-phosphate + hypoxanthine. The enzyme catalyses adenosine + H2O + H(+) = inosine + NH4(+). In terms of biological role, purine nucleoside enzyme that catalyzes the phosphorolysis of adenosine and inosine nucleosides, yielding D-ribose 1-phosphate and the respective free bases, adenine and hypoxanthine. Also catalyzes the phosphorolysis of S-methyl-5'-thioadenosine into adenine and S-methyl-5-thio-alpha-D-ribose 1-phosphate. Also has adenosine deaminase activity. The polypeptide is Purine nucleoside phosphorylase RC0672 (Rickettsia conorii (strain ATCC VR-613 / Malish 7)).